Here is an 87-residue protein sequence, read N- to C-terminus: uncharacterized protein (87 aa).

A 2Fe-2S ferredoxin-type domain is found at 4–87; sequence SKIIILNNNK…TISGSILIKI (84 aa). [2Fe-2S] cluster is bound by residues cysteine 39, cysteine 44, cysteine 47, and cysteine 75.

[2Fe-2S] cluster serves as cofactor.

This is an uncharacterized protein from Buchnera aphidicola subsp. Baizongia pistaciae (strain Bp).